Here is a 146-residue protein sequence, read N- to C-terminus: Single-stranded DNA-binding protein, mitochondrial (146 aa).

Residues 1-22 constitute a mitochondrion transit peptide; that stretch reads MQHTRRMLNPLLTGLRNLPARG. One can recognise an SSB domain in the interval 38 to 142; it reads VNTVTILGRV…IIADDVLFFR (105 aa).

As to quaternary structure, homotetramer. As to expression, uniformly distributed in the early embryo. High levels detected in the anterior and posterior midgut primordia of stage 12 embryos. In larvae, high levels were detected in proliferating tissues including the CNS and digestive tract. In adults, highly expressed in the CNS, digestive tract and ovary.

The protein localises to the mitochondrion. Its function is as follows. Binds preferentially and cooperatively to pyrimidine rich single-stranded DNA (ss-DNA). Required to maintain the copy number of mitochondrial DNA (mtDNA) and plays crucial roles during mtDNA replication that stimulate activity of the gamma complex polymerase PolG1/tam at the replication fork. Promotes PolG1 activity largely by organizing the template DNA and eliminating secondary structures to favor ss-DNA conformations that facilitate PolG1 activity. The sequence is that of Single-stranded DNA-binding protein, mitochondrial (mtSSB) from Drosophila melanogaster (Fruit fly).